Consider the following 689-residue polypeptide: DNA ligase (689 aa).

NAD(+)-binding positions include 51–55, 100–101, and glutamate 129; these read DSEYD and SL. Lysine 131 acts as the N6-AMP-lysine intermediate in catalysis. Positions 152, 189, 308, and 332 each coordinate NAD(+). The Zn(2+) site is built by cysteine 426, cysteine 429, cysteine 444, and cysteine 450. The BRCT domain maps to 609–689; that stretch reads ADEQPLKGQT…ELLALLAANR (81 aa).

It belongs to the NAD-dependent DNA ligase family. LigA subfamily. Requires Mg(2+) as cofactor. Mn(2+) is required as a cofactor.

It carries out the reaction NAD(+) + (deoxyribonucleotide)n-3'-hydroxyl + 5'-phospho-(deoxyribonucleotide)m = (deoxyribonucleotide)n+m + AMP + beta-nicotinamide D-nucleotide.. Its function is as follows. DNA ligase that catalyzes the formation of phosphodiester linkages between 5'-phosphoryl and 3'-hydroxyl groups in double-stranded DNA using NAD as a coenzyme and as the energy source for the reaction. It is essential for DNA replication and repair of damaged DNA. In Shewanella oneidensis (strain ATCC 700550 / JCM 31522 / CIP 106686 / LMG 19005 / NCIMB 14063 / MR-1), this protein is DNA ligase.